The primary structure comprises 147 residues: D-aminoacyl-tRNA deacylase (147 aa).

The short motif at 136-137 (GP) is the Gly-cisPro motif, important for rejection of L-amino acids element.

The protein belongs to the DTD family. Homodimer.

Its subcellular location is the cytoplasm. It catalyses the reaction glycyl-tRNA(Ala) + H2O = tRNA(Ala) + glycine + H(+). The catalysed reaction is a D-aminoacyl-tRNA + H2O = a tRNA + a D-alpha-amino acid + H(+). Functionally, an aminoacyl-tRNA editing enzyme that deacylates mischarged D-aminoacyl-tRNAs. Also deacylates mischarged glycyl-tRNA(Ala), protecting cells against glycine mischarging by AlaRS. Acts via tRNA-based rather than protein-based catalysis; rejects L-amino acids rather than detecting D-amino acids in the active site. By recycling D-aminoacyl-tRNA to D-amino acids and free tRNA molecules, this enzyme counteracts the toxicity associated with the formation of D-aminoacyl-tRNA entities in vivo and helps enforce protein L-homochirality. The protein is D-aminoacyl-tRNA deacylase of Streptococcus equi subsp. zooepidemicus (strain MGCS10565).